Reading from the N-terminus, the 374-residue chain is tRNA (guanine(26)-N(2))-dimethyltransferase (374 aa).

Residues 1-367 (MILKEGEVVF…ATLKNVIEAI (367 aa)) form the Trm1 methyltransferase domain. Positions 34, 66, 86, 113, and 114 each coordinate S-adenosyl-L-methionine.

The protein belongs to the class I-like SAM-binding methyltransferase superfamily. Trm1 family.

It carries out the reaction guanosine(26) in tRNA + 2 S-adenosyl-L-methionine = N(2)-dimethylguanosine(26) in tRNA + 2 S-adenosyl-L-homocysteine + 2 H(+). Its function is as follows. Dimethylates a single guanine residue at position 26 of a number of tRNAs using S-adenosyl-L-methionine as donor of the methyl groups. This chain is tRNA (guanine(26)-N(2))-dimethyltransferase, found in Methanocaldococcus jannaschii (strain ATCC 43067 / DSM 2661 / JAL-1 / JCM 10045 / NBRC 100440) (Methanococcus jannaschii).